Reading from the N-terminus, the 1270-residue chain is Vigilin (1270 aa).

Positions 1–11 (MSSVAVLTQES) are enriched in polar residues. Disordered stretches follow at residues 1–23 (MSSV…TQQQ) and 28–47 (ALNS…FPPL). 11 KH domains span residues 150-188 (ASAT…IPRP), 219-260 (DKRA…IPPP), 291-333 (KKKT…IPPT), 360-402 (ANSF…EFTE), 431-473 (INRT…IPPD), 504-545 (ENER…NFPD), 577-619 (VENS…LPGR), 651-693 (ANIT…FPTE), 724-766 (QTKS…FPTS), 798-840 (DNVV…LPTV), and 872-913 (EAQV…FPDR). Residues 911-947 (PDREENPAPVAEPALQENGEEGGEGKDGKDADPSSPR) are disordered. Residues 933–947 (GEGKDGKDADPSSPR) are compositionally biased toward basic and acidic residues. KH domains lie at 970-1012 (ALVP…VPAP), 1051-1093 (ALRS…FPDK), and 1126-1168 (LEQM…FPQS). Residues 1217–1270 (SHEESKVPSKGFVVRDAPCGTVNNEKAPDMSSSEDFPSFGAQVAPKTLPWGPKR) form a disordered region.

The protein resides in the cytoplasm. The polypeptide is Vigilin (HDLBP) (Gallus gallus (Chicken)).